Reading from the N-terminus, the 24-residue chain is Lycosin-I (24 aa).

Belongs to the cationic peptide 04 (cupiennin) family. 05 subfamily. Monomer in solution. Small size oligomers on the lipid membranes.

The protein resides in the secreted. It localises to the target cell membrane. Antimicrobial peptide that inhibits many reference strains of bacteria and fungi. Is potent against Candida species and multidrug-resistant Acinetobacter baumannii (MDRAB). Is probably localized in the cytoplasm after being transported through the cell wall and membrane. Is able to interact with cell membranes and enter into cell plasma to activate the mitochondrial death pathway to sensitize cancer cells for apoptosis, as well as up-regulates p27 to inhibit cell proliferation. It shows very low effect on normal cells, such as erythrocytes, Hek293t cells. It also potently inhibits tumor cell growth in vitro, and suppresses various tumor growth in vivo when tested in human cancer xenograft models. It interacts with the cell membrane and is then internalized into the cytoplasm of cancer cells to initiate the programmable cell death. In addition, this peptide has the therapeutic effects of anti-hypertension by endothelium-dependent vasodilatation via the NO/sGC/cGMP signaling pathway. In vivo, this peptide also shows a significant ability to inhibit T.gondii invasion and proliferation, making it a potential alternative agent for the treatment of toxoplasmosis. This chain is Lycosin-I, found in Lycosa singoriensis (Wolf spider).